Consider the following 3189-residue polypeptide: MEPLKNVNTGQPCSTVPFPVSDETVEHLNGLYEEINRRFGLDRDAIETILPCTPFQYDVLDCAANDARHAVGHAMYEISQHVHVQRFIAAWRETVRRTPALRACTFTSTTGESFQLVLRESFVLSRIYWSSSSSLQAAVLKDETTAAIAGPRCNRLVLLEDPDTRKQLLIWVFHLALVDSTVQEPILRRVLAAYKSEDDQLDSLPLTPDSSGGSDSDSPSTLKMPRAFDQEKATQFWQRQLSGLDASVFPPLSSHLTTPKADAKIEHYISWPASAAQHRWSSTTVCQAALAVLLSRYSHSSEALFGVVTEQVCMFEGQRLLINGPTRSVVPFRVHCGPEQSVTDLLKSIASDNHDMRQFAHVGLCNISRIGDDQSAACRFQTVLSVSNRRSSEDAASGEVLQILQESEGFAPCADRALLLRCETSRQGALLVARYDQGVIEPPQMARFLRQLGWLMEQLQSAADDALSVKQLDIVTREDRAEIDSWNSDALEVQESLLHSAFVKRAAESPSDPAVLSWDGAWTYSELDNVSSRLAAHIRSLDLSHEQLIVPVYFEKSKWVVASILAVLKAGHAFTLIDPKDPPARTTRIVQQTSAKVALTSKLHQDTVQAIIGRCIVVDDDFVQSLGSASQCQEKSELTVKPHNLAYAIFTSGSTGDPKGIMIEHQAFASCVAKFGPALIPHNARALQFASHGFGACLLEILPTLLRGGCVCIPSDLDRMHNIPDFIRRYNVNWMMATPSYMTTFKPEDVPGLQTLILVGEQMSASVNATWASRLGLFDGYGQSESCSICFIGKISPVSEANNIGRAVGAHSWIVHPDDPDRLAPVGAVGELLIESPGIARGYIAAPATDRNPFLETAPAWYAPRQPPTGVKFYRTGDLARYAADGTVVCLGRIDSQVKIRGQRVEMGAVETRLRQQVPSDITVVAEAVKRSGSSGSTVITAFLIDSSDKNNSSAASAKDARILDQTATQEMNAKLCQVLPPHSVPSCYICMHALPRTATGKVDRKTLRSIGSKLLEQQAYKKSPETMQKSKSAETLETGPEARLKEVWLQSFNLEPASPKCGASFFELGGDSITAIKMVNMARAAGLELKVSDIFQNPTLARLQAVMSGDSTPSTITTPFATIPASTWDGPVEQSYSQGRLWFLDQLDIGAVWYLIPYAVRMRGALNIDALRAALLALEQRHETLRTTFENQNGVGVQIVHQRLAKELKIIDASSHGDDGYLQPLEQEQTTPFDLTCEAGWRASLICVGEDHHVLSIVMHHIVSDGWSIDVLRQELGQLYAAVLHGDEDPLSAVSPLPIQYRDFSMWQRRQQVAEHDRQLQYWRKQLADCSPAKLPTDFPRPPLLSGDAGSVPVEISGELFQKLHRFCNVTSTTPFAVLLAAFRAAHYRLTGVDDAVVGTPIANRNRPELERLIGFFVNTQCMRITVDDDDTFEGLVRQVRRTTTEAFENEDVPFERVVSAMLPAGGGSRDLSQTPLAQLIFAVHSQENLGKFELEGLESEPVANKAYTRFDAEFHLFQTRDGLNGYLNFAAELFKLETMQNVVSVFLQILRHGLEQPKSLISVLPLTDGLKELDSMGLLKIHRGLEYQRDSSLVDIFRSQVATCPDTIAVIDSSARLTYAQLDHQSNLLEAWIRRKGLPAESLVGVLSPRSCETIIAFLGILKANLAYLPLDPKSPVSRMRDVLSDLPGHTIILLGSDVAAPDLELPCLELVRISDALKSGASAVNGSETTDLSAPSANSLAYVLYTSGSTGRPKGVMVEHRAIVRLVQRGVIPNFPPLRGAIMAHLFNTVFDGATYEIFLMLLNGGTLVCIDYLTTLSPKALETVFLREGINCAIMTPALLKLYLANARDGLKGLDMLMVAGDRFDPQDAVEAQTLVRGDCYNAYGPTENGVMSTLYKIDTSDSFINGVPLGRAIDNSGAYITDPNQQLVGPGVLGELIVTGDGLARGYTDPALDRDRFVQVVINGESVRAYRTGDRMRYRAGQDCLFEFFGRMDFQFKIRSNRIESAEVEAAILSHPLVRDAAIVVVGVQEEQEPEMVGFVVAADDAVEQEATDNQVEGWQELFESSMYNGIDAISPSALGKDFTGWTSMYDGSEIDKSEMQEWLDDTIHTLRDGHVPGHVLEIGTGTGMILFNLGSVESYVGLEPTKSAVEFVNKAIKTLPNLAGRAEVHTGTATDIDQLSGLRPDLVILNSVVQYFPTVEYLTRVVDALVRIRGVKRLFFGDVRSQALHRQFLAACAMHALGKTATRDDVRRYMAEREEREEELLVEPAFFTALMNRHPNLIQHVEILPKNIRATNELSAYRYAAVVHLRDPESAARPVYPIAADDWVDFQASQMRSDVLREYLRLSAGADTVAVCNIPYEKTIFERLIVESLDDNTGSDAPQSRLHGRSLDGAPWISAVRSDAESRASLSVPDLVQLAAESGFQVQVSAARQWSQSGALDAVFHRRHASSSQPTMRTLFQFPDDNALRASATLTNRPLQRLQRRRVAAQIRERLQTLVPSYMIPAKIVVLDQMPLNANGKVDRKELARRARTTTMTKKKKPQRLASEPACPISDIEVALCEEATATFGMQVGISDHFFKLGGHSLLATKLISRVGDRLKARLTVKDVFDHPIFSELAIVIREGLQNVVPVALNGGGQAKQGSAGVVAPRNEMETMLCEEFANVLGMDVGVTDNFFDLGGHSLMATKLAARIGRRLNTTISVKEVFEHPIVFQLANSLELGQLESDRVKHTMLADYTAFQLLSVEDLQGFLQNEISPQLECAHGGIQDVYPATHMQKAFLCDASTGHPKPLVPFYIDFPPDSDCSTLVEACSSLVKRFDMFRTVVVEAAGELYQVVLEHFDLQIDVVETEENVHAATNDFVDRILEVPVHLGQPLIQFTILKQASSVRVLLCLSHALYDGLSLEHVVRDLHMLYKGRSLLPANQFSRYMQYMDHTRKAGCDFWRDVIQDTPITVLGHVDAGGRELEVEAARTLHATKIISIPLQAVRSSIITQATVFNAACALVLSRETGAKDVVFGRIVSGRQGLPVSWQNIVGPCTNAVPVRARIIDDDDDNHRQMLRDMQDQYLLSLPFETLDFDEVRRSCTNWPATANNYACCVTYHDFSYHPESEMEQQRVEMGVLARKDALLKEEPVYDLGIAGEVEPDGVHLQVTVVAKTRLFSEERAAYLMEEVCRLFESLNSAL.

Residues 73 to 466 are condensation 1; that stretch reads HAMYEISQHV…EQLQSAADDA (394 aa). The interval 202–223 is disordered; the sequence is DSLPLTPDSSGGSDSDSPSTLK. Residues 208-220 show a composition bias toward low complexity; that stretch reads PDSSGGSDSDSPS. Positions 507–901 are adenylation 1; it reads AESPSDPAVL…GRIDSQVKIR (395 aa). One can recognise a Carrier 1 domain in the interval 1036–1112; the sequence is TLETGPEARL…RLQAVMSGDS (77 aa). Ser1073 is modified (O-(pantetheine 4'-phosphoryl)serine). Positions 1136-1569 are condensation 2; the sequence is SYSQGRLWFL…KSLISVLPLT (434 aa). Residues 1599–2004 are adenylation 2; sequence FRSQVATCPD…GRMDFQFKIR (406 aa). An S-adenosyl-L-methionine-dependent N-methyltransferase region spans residues 2072–2211; it reads MYNGIDAISP…FPTVEYLTRV (140 aa). 2 Carrier domains span residues 2557 to 2631 and 2654 to 2728; these read CPIS…REGL and APRN…ELGQ. Residues Ser2591 and Ser2688 each carry the O-(pantetheine 4'-phosphoryl)serine modification. Residues 2773–3181 are condensation 3; it reads QDVYPATHMQ…AYLMEEVCRL (409 aa).

Belongs to the NRP synthetase family.

The enzyme catalyses 3 (R)-2-hydroxy-3-methylbutanoate + 3 L-phenylalanine + 3 S-adenosyl-L-methionine + 6 ATP = beauvericin + 6 AMP + 3 S-adenosyl-L-homocysteine + 6 diphosphate + 6 H(+). In terms of biological role, beauvericin nonribosomal cyclodepsipeptide synthetase; part of the gene cluster that mediates the biosynthesis of beauvericin (BEA), a non-ribosomal cyclic hexadepsipeptide that shows antibiotic, antifungal, insecticidal, and cancer cell antiproliferative and antihaptotactic activity. Ketoisovalerate reductase BEA2 catalyzes the NADPH-specific reduction of ketoisovaleric acid to hydroxyisovalerate, a precursor for beauvericin biosynthesis. The nonribosomal cyclodepsipeptide synthetase BEA1 then catalyzes the formation of beauvericin via condensation and cyclization of 3 dipeptidol monomers, each composed of one unit of hydroxyisovalerate and one unit of N-methyl-phenylalanine. The chain is Beauvericin nonribosomal cyclodepsipeptide synthetase (Beas) from Beauveria bassiana (White muscardine disease fungus).